The chain runs to 122 residues: Large ribosomal subunit protein uL14c (122 aa).

The protein belongs to the universal ribosomal protein uL14 family. Part of the 50S ribosomal subunit.

Its subcellular location is the plastid. The protein resides in the chloroplast. In terms of biological role, binds to 23S rRNA. The polypeptide is Large ribosomal subunit protein uL14c (Stigeoclonium helveticum (Green alga)).